The chain runs to 250 residues: MWNNVRQLNLAASALYALLLLVLAAAGCYWLIQRPAFALREIRIDGDTEHINAPTVRAGVVGRLKGNFFTVDLDLARVAFEQMPWVRHASVRRVWPNALAVTLEEYKPLGTWGNDQLVSVDGELFTANQGELDAELPSFDGPEGSAKEVVARYRDFAKWFAPIHATPEEVTLSPRYAWTVKLSNGMQVELGRERNSDTLPDRIQRLVAAWPSVTQRWGGDIEYADLRYPNGFAIRAAGMRFLTDTDKGKK.

Residues 1 to 11 (MWNNVRQLNLA) lie on the Cytoplasmic side of the membrane. Residues 12–32 (ASALYALLLLVLAAAGCYWLI) traverse the membrane as a helical segment. Residues 33 to 250 (QRPAFALREI…FLTDTDKGKK (218 aa)) are Periplasmic-facing. A POTRA domain is found at 37–106 (FALREIRIDG…NALAVTLEEY (70 aa)).

This sequence belongs to the FtsQ/DivIB family. FtsQ subfamily. In terms of assembly, part of a complex composed of FtsB, FtsL and FtsQ.

It is found in the cell inner membrane. Essential cell division protein. May link together the upstream cell division proteins, which are predominantly cytoplasmic, with the downstream cell division proteins, which are predominantly periplasmic. May control correct divisome assembly. The protein is Cell division protein FtsQ of Burkholderia pseudomallei (strain K96243).